The chain runs to 24 residues: Brevinin-1CSa (24 aa).

An intrachain disulfide couples C18 to C24.

Expressed by the skin glands.

It localises to the secreted. The protein localises to the target cell membrane. In terms of biological role, antibacterial peptide. Has activity against the Gram-positive bacterium S.aureus (MIC=2 uM) and the Gram-negative bacterium E.coli (MIC=32 uM). Has a strong hemolytic activity (LC(50)=5 uM). The protein is Brevinin-1CSa of Rana cascadae (Cascades frog).